Consider the following 148-residue polypeptide: NADH-quinone oxidoreductase subunit C (148 aa).

Belongs to the complex I 30 kDa subunit family. In terms of assembly, NDH-1 is composed of 14 different subunits. Subunits NuoB, C, D, E, F, and G constitute the peripheral sector of the complex.

It is found in the cell membrane. The catalysed reaction is a quinone + NADH + 5 H(+)(in) = a quinol + NAD(+) + 4 H(+)(out). Its function is as follows. NDH-1 shuttles electrons from NADH, via FMN and iron-sulfur (Fe-S) centers, to quinones in the respiratory chain. The immediate electron acceptor for the enzyme in this species is believed to be a menaquinone. Couples the redox reaction to proton translocation (for every two electrons transferred, four hydrogen ions are translocated across the cytoplasmic membrane), and thus conserves the redox energy in a proton gradient. The sequence is that of NADH-quinone oxidoreductase subunit C from Moorella thermoacetica (strain ATCC 39073 / JCM 9320).